The primary structure comprises 363 residues: Proline/serine-rich coiled-coil protein 1 (363 aa).

Ser-22 bears the Phosphoserine mark. Repeat 1 spans residues 38–41 (PEKP). Residues 39-67 (EKPLRRGLSHRSDPNAVAPAPQGVRLSLG) form a disordered region. Position 42 is a phosphoserine (Leu-42). Position 45 is a phosphothreonine (Gly-45). Phosphoserine occurs at positions 47, 65, 70, 98, 122, and 140. The stretch at 68–71 (PLSP) is repeat 2. The stretch at 70-94 (SPEKLEEILDEANRLAAQLEQCALQ) forms a coiled coil. Positions 95–363 (DRESAGEGLG…RKVAVPGPTR (269 aa)) are disordered. A 4 X 4 AA repeats of P-X-X-P region spans residues 103 to 246 (LGPRRVKPSP…HPSPPGPPTP (144 aa)). Residues 112-124 (PRRETFVLKDSPV) are compositionally biased toward basic and acidic residues. A compositionally biased stretch (low complexity) spans 133-148 (SLTRSTPSPSSLTPRL). Thr-145 carries the phosphothreonine modification. Phosphoserine is present on residues Ser-186 and Ser-190. Polar residues predominate over residues 186-196 (SPASSPLTRST). Low complexity predominate over residues 197 to 210 (PPVRGRAGPSGRAA). Position 212 is a phosphoserine (Ser-212). Thr-215 carries the phosphothreonine modification. Tandem repeats lie at residues 238–241 (PSPP) and 243–246 (PPTP).

Belongs to the PSRC1 family. As to quaternary structure, interacts with APC2. Interacts with KIF2A. Interacts with ANKRD53; recruits ANKRD53 to the spindle during mitosis. Post-translationally, phosphorylated during mitosis. In terms of tissue distribution, widely expressed in adult and fetal tissues, with highest expression in the adult brain and fetal thymus. Not detected in adult skeletal muscle.

Its subcellular location is the cytoplasm. The protein resides in the cytoskeleton. The protein localises to the spindle. It is found in the spindle pole. Its function is as follows. Required for normal progression through mitosis. Required for normal congress of chromosomes at the metaphase plate, and for normal rate of chromosomal segregation during anaphase. Plays a role in the regulation of mitotic spindle dynamics. Increases the rate of turnover of microtubules on metaphase spindles, and contributes to the generation of normal tension across sister kinetochores. Recruits KIF2A and ANKRD53 to the mitotic spindle and spindle poles. May participate in p53/TP53-regulated growth suppression. The chain is Proline/serine-rich coiled-coil protein 1 (PSRC1) from Homo sapiens (Human).